Reading from the N-terminus, the 82-residue chain is Delta-actitoxin-Aeq2c (82 aa).

Positions 1–19 (MNRLMILVFAAVFLALASA) are cleaved as a signal peptide. A propeptide spanning residues 20–26 (DEDVDIA) is cleaved from the precursor. 3 disulfide bridges follow: C32-C79, C34-C69, and C62-C80.

Belongs to the sea anemone sodium channel inhibitory toxin family. Type I subfamily.

It is found in the secreted. It localises to the nematocyst. In terms of biological role, binds specifically to voltage-gated sodium channels (Nav), thereby delaying their inactivation during signal transduction. Causes death to crabs. The protein is Delta-actitoxin-Aeq2c of Actinia equina (Beadlet anemone).